The sequence spans 132 residues: uncharacterized protein (132 aa).

This is an uncharacterized protein from Gallus gallus (Chicken).